We begin with the raw amino-acid sequence, 128 residues long: Large ribosomal subunit protein bL17 (128 aa).

This sequence belongs to the bacterial ribosomal protein bL17 family. Part of the 50S ribosomal subunit. Contacts protein L32.

The sequence is that of Large ribosomal subunit protein bL17 from Pseudomonas entomophila (strain L48).